A 748-amino-acid chain; its full sequence is Cytosolic phospholipase A2 (748 aa).

Residues 1–178 (MSFIDPYQHI…MKKLLGPKKS (178 aa)) are phospholipid binding. Ser-2 is modified (phosphoserine). Residues 6 to 122 (PYQHIIVEHQ…KVGEKKEVPF (117 aa)) enclose the C2 domain. Residues Asp-40, Thr-41, Asp-43, Asn-65, Asp-93, Ala-94, and Asn-95 each contribute to the Ca(2+) site. Residues 140 to 739 (SCPDLRFSMA…SNVEARKFFN (600 aa)) form the PLA2c domain. Catalysis depends on Ser-228, which acts as the Nucleophile. Thr-268 is subject to Phosphothreonine. Residues 427-458 (KHIVSNDSSDSDDEAQGPKGTENEEAEKEYQS) form a disordered region. Ser-434, Ser-435, and Ser-437 each carry phosphoserine. A Phosphoserine; by MAPK modification is found at Ser-505. Ser-515 carries the phosphoserine modification. A Glycyl lysine isopeptide (Lys-Gly) (interchain with G-Cter in SUMO2) cross-link involves residue Lys-540. The active-site Proton acceptor is Asp-548. Lys-605 is covalently cross-linked (Glycyl lysine isopeptide (Lys-Gly) (interchain with G-Cter in SUMO2)). A phosphoserine mark is found at Ser-726 and Ser-728.

Interacts with KAT5. Phosphorylated at both Ser-505 and Ser-726 in response to mitogenic stimuli. Expressed in various organs including uterus, kidney, spleen, liver, heart, lung and brain (at protein level).

It is found in the cytoplasm. The protein resides in the golgi apparatus membrane. It localises to the nucleus envelope. It catalyses the reaction a 1,2-diacyl-sn-glycero-3-phosphocholine + H2O = a 1-acyl-sn-glycero-3-phosphocholine + a fatty acid + H(+). It carries out the reaction a 1-O-alkyl-2-acyl-sn-glycero-3-phosphocholine + H2O = a 1-O-alkyl-sn-glycero-3-phosphocholine + a fatty acid + H(+). The enzyme catalyses a 1-acyl-sn-glycero-3-phosphocholine + H2O = sn-glycerol 3-phosphocholine + a fatty acid + H(+). The catalysed reaction is 1-hexadecanoyl-2-(5Z,8Z,11Z,14Z-eicosatetraenoyl)-sn-glycero-3-phosphocholine + H2O = 1-hexadecanoyl-sn-glycero-3-phosphocholine + (5Z,8Z,11Z,14Z)-eicosatetraenoate + H(+). It catalyses the reaction 1,2-di-(5Z,8Z,11Z,14Z-eicosatetraenoyl)-sn-glycero-3-phosphocholine + H2O = 1-(5Z,8Z,11Z,14Z-eicosatetraenoyl)-sn-glycero-3-phosphocholine + (5Z,8Z,11Z,14Z)-eicosatetraenoate + H(+). It carries out the reaction 1-octadecanoyl-2-(5Z,8Z,11Z,14Z-eicosatetraenoyl)-sn-glycero-3-phosphocholine + H2O = 1-octadecanoyl-sn-glycero-3-phosphocholine + (5Z,8Z,11Z,14Z)-eicosatetraenoate + H(+). The enzyme catalyses 1-hexadecanoyl-2-(9Z,12Z-octadecadienoyl)-sn-glycero-3-phosphocholine + H2O = (9Z,12Z)-octadecadienoate + 1-hexadecanoyl-sn-glycero-3-phosphocholine + H(+). The catalysed reaction is 1-octadecanoyl-2-(9Z,12Z,15Z-octadecatrienoyl)-sn-glycero-3-phosphocholine + H2O = (9Z,12Z,15Z)-octadecatrienoate + 1-octadecanoyl-sn-glycero-3-phosphocholine + H(+). It catalyses the reaction 1-(5Z,8Z,11Z,14Z-eicosatetraenoyl)-2-hexadecanoyl-sn-glycero-3-phosphocholine + H2O = 1-(5Z,8Z,11Z,14Z-eicosatetraenoyl)-sn-glycero-3-phosphocholine + hexadecanoate + H(+). It carries out the reaction 1-O-hexadecyl-2-(5Z,8Z,11Z,14Z)-eicosatetraenoyl-sn-glycero-3-phosphocholine + H2O = 1-O-hexadecyl-sn-glycero-3-phosphocholine + (5Z,8Z,11Z,14Z)-eicosatetraenoate + H(+). The enzyme catalyses 1,2-di-(9Z-octadecenoyl)-sn-glycero-3-phospho-(1'-sn-glycerol) + H2O = 1-(9Z-octadecenoyl)-sn-glycero-3-phospho-(1'-sn-glycerol) + (9Z)-octadecenoate + H(+). The catalysed reaction is 1-octadecanoyl-2-(5Z,8Z,11Z,14Z-eicosatetraenoyl)-sn-glycero-3-phosphate + H2O = 1-octadecanoyl-sn-glycero-3-phosphate + (5Z,8Z,11Z,14Z)-eicosatetraenoate + H(+). It catalyses the reaction 1-hexadecanoyl-sn-glycero-3-phosphocholine + H2O = sn-glycerol 3-phosphocholine + hexadecanoate + H(+). It carries out the reaction 2-(prostaglandin E2)-sn-glycero-3-phosphoethanolamine + H2O = sn-glycero-3-phosphoethanolamine + prostaglandin E2 + H(+). The enzyme catalyses 2-[(15S)-hydroxy-(5Z,8Z,11Z,13E)-eicosatetraenoyl]-sn-glycero-3-phosphocholine + H2O = (15S)-hydroxy-(5Z,8Z,11Z,13E)-eicosatetraenoate + sn-glycerol 3-phosphocholine + H(+). The catalysed reaction is 2-[(15R)-hydroxy-(5Z,8Z,11Z,13E)-eicosatetraenoyl]-sn-glycero-3-phosphocholine + H2O = (15R)-hydroxy-(5Z,8Z,11Z,13E)-eicosatetraenoate + sn-glycerol 3-phosphocholine + H(+). It catalyses the reaction 2-(prostaglandin E2)-sn-glycero-3-phosphocholine + H2O = prostaglandin E2 + sn-glycerol 3-phosphocholine + H(+). It carries out the reaction 2-[(11R)-hydroxy-(5Z,8Z,12E,14Z)-eicosatetraenoyl]-sn-glycero-3-phosphocholine + H2O = (11R)-hydroxy-(5Z,8Z,12E,14Z)-eicosatetraenoate + sn-glycerol 3-phosphocholine + H(+). The enzyme catalyses 1-(5Z,8Z,11Z,14Z-eicosatetraenoyl)-2-O-hexadecyl-sn-glycero-3-phosphocholine + H2O = 2-O-hexadecyl-sn-glycero-3-phosphocholine + (5Z,8Z,11Z,14Z)-eicosatetraenoate + H(+). The catalysed reaction is 1-octadecanoyl-2-(5Z,8Z,11Z,14Z-eicosatetraenoyl)-sn-glycero-3-phosphocholine + glycerol = 1-(5Z,8Z,11Z,14Z-eicosatetraenoyl)-glycerol + 1-octadecanoyl-sn-glycero-3-phosphocholine. It catalyses the reaction 1-octadecanoyl-2-(9Z,12Z,15Z-octadecatrienoyl)-sn-glycero-3-phosphocholine + glycerol = 1-(9Z,12Z,15Z-octadecatrienoyl)-glycerol + 1-octadecanoyl-sn-glycero-3-phosphocholine. The protein operates within membrane lipid metabolism; glycerophospholipid metabolism. It functions in the pathway lipid metabolism; arachidonate metabolism. Its pathway is lipid metabolism; prostaglandin biosynthesis. It participates in lipid metabolism; leukotriene B4 biosynthesis. Activated by cytosolic calcium, which is necessary for binding to membrane lipids. Activated by phosphorylation in response to mitogenic stimuli. Stimulated by agonists such as ATP and thrombin. Its function is as follows. Has primarily calcium-dependent phospholipase and lysophospholipase activities, with a major role in membrane lipid remodeling and biosynthesis of lipid mediators of the inflammatory response. Plays an important role in embryo implantation and parturition through its ability to trigger prostanoid production. Preferentially hydrolyzes the ester bond of the fatty acyl group attached at sn-2 position of phospholipids (phospholipase A2 activity). Selectively hydrolyzes sn-2 arachidonoyl group from membrane phospholipids, providing the precursor for eicosanoid biosynthesis via the cyclooxygenase pathway. In an alternative pathway of eicosanoid biosynthesis, hydrolyzes sn-2 fatty acyl chain of eicosanoid lysophopholipids to release free bioactive eicosanoids. Hydrolyzes the ester bond of the fatty acyl group attached at sn-1 position of phospholipids (phospholipase A1 activity) only if an ether linkage rather than an ester linkage is present at the sn-2 position. This hydrolysis is not stereospecific. Has calcium-independent phospholipase A2 and lysophospholipase activities in the presence of phosphoinositides. Has O-acyltransferase activity. Catalyzes the transfer of fatty acyl chains from phospholipids to a primary hydroxyl group of glycerol (sn-1 or sn-3), potentially contributing to monoacylglycerol synthesis. The sequence is that of Cytosolic phospholipase A2 (Pla2g4a) from Mus musculus (Mouse).